The primary structure comprises 214 residues: Adenylate kinase (214 aa).

Position 10-15 (10-15 (GAGKGT)) interacts with ATP. The tract at residues 30-59 (STGDILRAAVKDMTPMGGKAKSFMDAGALV) is NMP. Residues threonine 31, arginine 36, 57–59 (ALV), 85–88 (GFPR), and glutamine 92 each bind AMP. An LID region spans residues 126–163 (GRRTCRNCGKGFHVSFDPPKSSGICDECSGELYQRDDD). Arginine 127 contributes to the ATP binding site. The Zn(2+) site is built by cysteine 130, cysteine 133, cysteine 150, and cysteine 153. AMP contacts are provided by arginine 160 and arginine 171. Glycine 199 is a binding site for ATP.

This sequence belongs to the adenylate kinase family. As to quaternary structure, monomer.

It is found in the cytoplasm. The catalysed reaction is AMP + ATP = 2 ADP. It functions in the pathway purine metabolism; AMP biosynthesis via salvage pathway; AMP from ADP: step 1/1. Its function is as follows. Catalyzes the reversible transfer of the terminal phosphate group between ATP and AMP. Plays an important role in cellular energy homeostasis and in adenine nucleotide metabolism. This is Adenylate kinase from Geotalea daltonii (strain DSM 22248 / JCM 15807 / FRC-32) (Geobacter daltonii).